The sequence spans 628 residues: MSNGLPISIGRPCTHDSQRSLSASDSRIHSRFDSLLDTDLPMVHSEGTSAPTQLLRHPNIWFGNIPPPPRRPQDNRDFSPLHPLVFPGHHSQLRHVHETQQVQQTCPGELKLSGIEELPPAPQRQHSLPLHITRPSRFPHHFHARRPDVLPSLPDHGPVLAETKPRTSVRQPRSTTRGPSFRPILLPEVVHVHDDPPHSSLRPGRSRSRQLQPTIRRPLLAPNQFNSPRQPPPLSDDPGILGPCPLAPNSTRDPPPRPITPGPFNTHGVRPLSVLPRAPPRRGLLPNPRRHRTSTGHIPSTTASRPTGPPSRLQRPVHLHQSGPHTPDFRPSGIRKDAFLQTGPRLGHLERLGQSADLRTSERTPSTKRRLPRPSEPNCLPSSLPEATLAPSYRHRRSHPLLPNPPAALPPIAYTSGRGKIHHSLPKGALPKEGPPPPPRRLPSPATPPQSPLRDLGRTPSFPTPPKTSTRAPESCIAAPPTDIAPLDSDPVLSVRTEVHAPERRTFMDPEALRAALAGLPSPPLSVGIIRTASQTVLPTNSPSPTRHLPPTSSPWILQSPVGEDAIVDSEDDSISSFHSHDFNSPSGPLRSQSPSRFRLHLRSPSTSSGIEPWSPASYDYGSAPDTD.

3 disordered regions span residues 1-24 (MSNG…LSAS), 141-492 (HFHA…SDPV), and 537-628 (VLPT…PDTD). 2 stretches are compositionally biased toward polar residues: residues 166 to 178 (RTSV…TTRG) and 295 to 305 (TGHIPSTTASR). Positions 433–451 (EGPPPPPRRLPSPATPPQS) are enriched in pro residues. The segment covering 586–596 (PSGPLRSQSPS) has biased composition (polar residues).

The protein belongs to the tymoviridae protein p69 family.

Its function is as follows. Acts as a suppressor of RNA-mediated gene silencing, also known as post-transcriptional gene silencing (PTGS), a mechanism of plant viral defense that limits the accumulation of viral RNAs. The chain is 69 kDa protein from Turnip yellow mosaic virus (isolate Australia).